The chain runs to 346 residues: (R,R)-butanediol dehydrogenase (346 aa).

3 residues coordinate Zn(2+): C37, H70, and E152.

The protein belongs to the zinc-containing alcohol dehydrogenase family. Homotetramer. Interacts with BrxC. Requires Zn(2+) as cofactor.

It localises to the cytoplasm. The protein resides in the secreted. It catalyses the reaction (R,R)-butane-2,3-diol + NAD(+) = (R)-acetoin + NADH + H(+). This Bacillus subtilis (strain 168) protein is (R,R)-butanediol dehydrogenase.